A 361-amino-acid polypeptide reads, in one-letter code: Peroxidase A (361 aa).

Belongs to the peroxidase family. Post-translationally, partially N-glycosylated.

It is found in the secreted. It carries out the reaction 2 a phenolic donor + H2O2 = 2 a phenolic radical donor + 2 H2O. In Aloe vera (Aloe), this protein is Peroxidase A.